Reading from the N-terminus, the 203-residue chain is uncharacterized protein (203 aa).

The protein belongs to the DadA oxidoreductase family.

Either a functional dehydrogenase or a non-functional fragment. This is an uncharacterized protein from Sinorhizobium fredii (strain NBRC 101917 / NGR234).